The primary structure comprises 146 residues: MLSSSAASCTSPNPDTDNPDKKVRWSSEKRRRASSTDSESKTHLDISKLPRSRRPSRLTVKYDRGHLQRWLEMEQWVDAQVQELFQGQADTSEPEIDLEALMELSTDEQRTQLEAILQDCPGNREPFISELLSQLKRLRRLSRPSK.

Residues 1–16 (MLSSSAASCTSPNPDT) are compositionally biased toward polar residues. The tract at residues 1 to 57 (MLSSSAASCTSPNPDTDNPDKKVRWSSEKRRRASSTDSESKTHLDISKLPRSRRPSR) is disordered. Basic and acidic residues-rich tracts occupy residues 18-28 (NPDKKVRWSSE) and 38-48 (SESKTHLDISK). An interaction with protein phosphatase 1 region spans residues 21–25 (KKVRW).

It belongs to the PP1 inhibitor family. Phosphorylated on several residues.

The protein resides in the cytoplasm. In terms of biological role, inhibitor of PPP1CA. Has inhibitory activity only when phosphorylated, creating a molecular switch for regulating the phosphorylation status of PPP1CA substrates and smooth muscle contraction. This Rattus norvegicus (Rat) protein is Protein phosphatase 1 regulatory subunit 14D (Ppp1r14d).